A 155-amino-acid polypeptide reads, in one-letter code: SsrA-binding protein (155 aa).

Residues 135-155 (KRESLKRRQDQRDIQRAMKNY) form a disordered region.

This sequence belongs to the SmpB family.

It localises to the cytoplasm. In terms of biological role, required for rescue of stalled ribosomes mediated by trans-translation. Binds to transfer-messenger RNA (tmRNA), required for stable association of tmRNA with ribosomes. tmRNA and SmpB together mimic tRNA shape, replacing the anticodon stem-loop with SmpB. tmRNA is encoded by the ssrA gene; the 2 termini fold to resemble tRNA(Ala) and it encodes a 'tag peptide', a short internal open reading frame. During trans-translation Ala-aminoacylated tmRNA acts like a tRNA, entering the A-site of stalled ribosomes, displacing the stalled mRNA. The ribosome then switches to translate the ORF on the tmRNA; the nascent peptide is terminated with the 'tag peptide' encoded by the tmRNA and targeted for degradation. The ribosome is freed to recommence translation, which seems to be the essential function of trans-translation. In Trichormus variabilis (strain ATCC 29413 / PCC 7937) (Anabaena variabilis), this protein is SsrA-binding protein.